Reading from the N-terminus, the 270-residue chain is uncharacterized protein (270 aa).

Its subcellular location is the virion. This is an uncharacterized protein from Acanthamoeba polyphaga (Amoeba).